Consider the following 350-residue polypeptide: Flap endonuclease 1 (350 aa).

An N-domain region spans residues Met1 to Lys101. Asp30, Asp83, Glu155, Glu157, Asp176, Asp178, and Asp239 together coordinate Mg(2+). Positions Glu119–Gly261 are I-domain. Residues Arg341–Phe349 form an interaction with PCNA region.

It belongs to the XPG/RAD2 endonuclease family. FEN1 subfamily. Interacts with PCNA. PCNA stimulates the nuclease activity without altering cleavage specificity. Mg(2+) is required as a cofactor.

Structure-specific nuclease with 5'-flap endonuclease and 5'-3' exonuclease activities involved in DNA replication and repair. During DNA replication, cleaves the 5'-overhanging flap structure that is generated by displacement synthesis when DNA polymerase encounters the 5'-end of a downstream Okazaki fragment. Binds the unpaired 3'-DNA end and kinks the DNA to facilitate 5' cleavage specificity. Cleaves one nucleotide into the double-stranded DNA from the junction in flap DNA, leaving a nick for ligation. Also involved in the base excision repair (BER) pathway. Acts as a genome stabilization factor that prevents flaps from equilibrating into structures that lead to duplications and deletions. Also possesses 5'-3' exonuclease activity on nicked or gapped double-stranded DNA. The protein is Flap endonuclease 1 of Aeropyrum pernix (strain ATCC 700893 / DSM 11879 / JCM 9820 / NBRC 100138 / K1).